Reading from the N-terminus, the 531-residue chain is Protein arginine N-methyltransferase 3 (531 aa).

Positions 1–43 (MCSLASGATGGRGAVENEEDLPELSDSGDEAAWEDEDDADLPH) are disordered. Cys2 is subject to N-acetylcysteine. The segment covering 16–39 (ENEEDLPELSDSGDEAAWEDEDDA) has biased composition (acidic residues). Phosphoserine is present on residues Ser25 and Ser27. The segment at 48–71 (TPCLFCNRLFTSAEETFSHCKSEH) adopts a C2H2-type zinc-finger fold. The tract at residues 48 to 71 (TPCLFCNRLFTSAEETFSHCKSEH) is interaction with ZNF200. Phosphoserine is present on Ser171. The tract at residues 186–531 (MKQFAQDFVM…NNSTQTYGLQ (346 aa)) is mediates interaction with ALDH1A1. An SAM-dependent MTase PRMT-type domain is found at 217-531 (DGVYFSSYGH…NNSTQTYGLQ (315 aa)). S-adenosyl-L-homocysteine-binding residues include Arg239, Gly263, Asp285, Ile313, and Glu314. Catalysis depends on residues Glu329 and Glu338. S-adenosyl-L-homocysteine is bound at residue Ser343.

The protein belongs to the class I-like SAM-binding methyltransferase superfamily. Protein arginine N-methyltransferase family. In terms of assembly, monomer and homodimer. Interacts with EPB41L3 (via FERM domain); the interaction is direct and inhibits the protein-arginine N-methyltransferase activity of PRMT3. Interacts with the 40S ribosomal protein RPS2. Interacts with ALDH1A1; the interaction is direct, inhibits ALDH1A1 aldehyde dehydrogenase activity and is independent of the methyltransferase activity of PRMT3. Interacts (via zinc-finger) with ZNF200 (via C-terminus); the interaction is direct and required to localize PRMT3 to the nucleus and inhibit its proteasomal degradation.

It localises to the cytoplasm. Its subcellular location is the cytosol. The protein localises to the nucleus. The catalysed reaction is L-arginyl-[protein] + S-adenosyl-L-methionine = N(omega)-methyl-L-arginyl-[protein] + S-adenosyl-L-homocysteine + H(+). The enzyme catalyses L-arginyl-[protein] + 2 S-adenosyl-L-methionine = N(omega),N(omega)-dimethyl-L-arginyl-[protein] + 2 S-adenosyl-L-homocysteine + 2 H(+). With respect to regulation, inhibited by N-ethylmaleimide and high concentrations of zinc chloride. Allosterically inhibited by SGC707. Allosterically inhibited by (1-(benzo[d][1,2,3]thiadiazol- 6-yl)-3-(2-cyclohexenylethyl)urea) and derivatives thereof. In terms of biological role, protein-arginine N-methyltransferase that catalyzes both the monomethylation and asymmetric dimethylation of the guanidino nitrogens of arginine residues in target proteins, and therefore falls into the group of type I methyltransferases. Catalyzes the asymmetric arginine dimethylation at multiple sites in the Arg/Gly-rich region of small ribosomal subunit protein uS5/RPS2. Also appears to methylate other ribosomal proteins. May regulate retinoic acid synthesis and signaling by inhibiting ALDH1A1 retinal dehydrogenase activity. Contributes to methylation of histone H4 'Arg-3', a specific tag for epigenetic transcriptional activation. Mediates asymmetric arginine dimethylation of histone H4 'Arg-3' (H4R3me2a) in the promoter region of miRNA miR-3648, to promote its transcription and osteogenesis. The chain is Protein arginine N-methyltransferase 3 from Homo sapiens (Human).